The chain runs to 311 residues: Putative dihydroorotate dehydrogenase A (fumarate) (311 aa).

Substrate-binding positions include lysine 45, 69-73 (NSMGL), and asparagine 128. Position 45–46 (45–46 (KT)) interacts with FMN. Asparagine 128 contacts FMN. The active-site Nucleophile is the cysteine 131. The FMN site is built by lysine 165 and valine 193. 194 to 195 (NS) is a binding site for substrate. FMN is bound by residues glycine 220, 248-249 (GG), and 270-271 (GT).

This sequence belongs to the dihydroorotate dehydrogenase family. Type 1 subfamily. Homodimer. FMN serves as cofactor.

Its subcellular location is the cytoplasm. The enzyme catalyses (S)-dihydroorotate + fumarate = orotate + succinate. It participates in pyrimidine metabolism; UMP biosynthesis via de novo pathway. In terms of biological role, catalyzes the conversion of dihydroorotate to orotate with fumarate as the electron acceptor. This is Putative dihydroorotate dehydrogenase A (fumarate) (pyrD) from Streptococcus pyogenes serotype M18 (strain MGAS8232).